A 117-amino-acid polypeptide reads, in one-letter code: Photosystem II reaction center Psb28 protein (117 aa).

It belongs to the Psb28 family. Part of the photosystem II complex.

It localises to the cellular thylakoid membrane. This is Photosystem II reaction center Psb28 protein from Prochlorococcus marinus (strain AS9601).